Here is a 479-residue protein sequence, read N- to C-terminus: Ribulose bisphosphate carboxylase large chain (479 aa).

Positions 1 to 2 are excised as a propeptide; the sequence is MS. Substrate is bound by residues Asn-123 and Thr-173. The Proton acceptor role is filled by Lys-175. Position 177 (Lys-177) interacts with substrate. Mg(2+) contacts are provided by Lys-201, Asp-203, and Glu-204. Lys-201 carries the N6-carboxylysine modification. Ser-208 carries the post-translational modification Phosphoserine. His-294 (proton acceptor) is an active-site residue. The substrate site is built by Arg-295 and His-327. A Phosphothreonine modification is found at Thr-330. Ser-379 contributes to the substrate binding site.

Belongs to the RuBisCO large chain family. Type I subfamily. As to quaternary structure, heterohexadecamer of 8 large chains and 8 small chains; disulfide-linked. The disulfide link is formed within the large subunit homodimers. Mg(2+) serves as cofactor. Post-translationally, the disulfide bond which can form in the large chain dimeric partners within the hexadecamer appears to be associated with oxidative stress and protein turnover.

Its subcellular location is the plastid. It localises to the chloroplast. The enzyme catalyses 2 (2R)-3-phosphoglycerate + 2 H(+) = D-ribulose 1,5-bisphosphate + CO2 + H2O. The catalysed reaction is D-ribulose 1,5-bisphosphate + O2 = 2-phosphoglycolate + (2R)-3-phosphoglycerate + 2 H(+). Its function is as follows. RuBisCO catalyzes two reactions: the carboxylation of D-ribulose 1,5-bisphosphate, the primary event in carbon dioxide fixation, as well as the oxidative fragmentation of the pentose substrate in the photorespiration process. Both reactions occur simultaneously and in competition at the same active site. The sequence is that of Ribulose bisphosphate carboxylase large chain from Brassica oleracea (Wild cabbage).